A 770-amino-acid chain; its full sequence is NAD-dependent malic enzyme (770 aa).

The interval 1–440 is malic enzyme; sequence MNTGDKAKSQ…KLNRFVFRSG (440 aa). K107 serves as the catalytic Proton acceptor. Residues E149 and D150 each coordinate a divalent metal cation. NAD(+)-binding residues include D175 and N300. The tract at residues 441–770 is phosphate acetyltransferase; the sequence is FIMKPVFAAA…LAVVESSHPV (330 aa).

This sequence in the N-terminal section; belongs to the malic enzymes family. It in the C-terminal section; belongs to the phosphate acetyltransferase and butyryltransferase family. As to quaternary structure, homooctamer. Requires Mg(2+) as cofactor. The cofactor is Mn(2+).

The enzyme catalyses (S)-malate + NAD(+) = pyruvate + CO2 + NADH. Subject to substrate inhibition and shows allosteric regulation by acetyl-CoA. Functionally, required for symbiotic nitrogen fixation. Plays a key role in the conversion of malate to acetyl-CoA for efficient tricarboxylic acid cycle function in nitrogen-fixating bacteria. The protein is NAD-dependent malic enzyme (dme) of Rhizobium meliloti (strain 1021) (Ensifer meliloti).